The primary structure comprises 109 residues: Large ribosomal subunit protein uL22 (109 aa).

The protein belongs to the universal ribosomal protein uL22 family. As to quaternary structure, part of the 50S ribosomal subunit.

Functionally, this protein binds specifically to 23S rRNA; its binding is stimulated by other ribosomal proteins, e.g. L4, L17, and L20. It is important during the early stages of 50S assembly. It makes multiple contacts with different domains of the 23S rRNA in the assembled 50S subunit and ribosome. In terms of biological role, the globular domain of the protein is located near the polypeptide exit tunnel on the outside of the subunit, while an extended beta-hairpin is found that lines the wall of the exit tunnel in the center of the 70S ribosome. The protein is Large ribosomal subunit protein uL22 of Cupriavidus taiwanensis (strain DSM 17343 / BCRC 17206 / CCUG 44338 / CIP 107171 / LMG 19424 / R1) (Ralstonia taiwanensis (strain LMG 19424)).